A 141-amino-acid chain; its full sequence is MAKKLVAVVKLAIQAGKATPAPPIGPALGQHGVNIMAFCKEYNAKTADQAGMVVPVEISIFEDRSFTFVLKTPPASVLIKKALGIESGSSEPHKTKVGSLTRAQLRQIAEQKLPDLNAHDVEAAMKIIAGTARSMGVTVVD.

It belongs to the universal ribosomal protein uL11 family. Part of the ribosomal stalk of the 50S ribosomal subunit. Interacts with L10 and the large rRNA to form the base of the stalk. L10 forms an elongated spine to which L12 dimers bind in a sequential fashion forming a multimeric L10(L12)X complex. One or more lysine residues are methylated.

Its function is as follows. Forms part of the ribosomal stalk which helps the ribosome interact with GTP-bound translation factors. The protein is Large ribosomal subunit protein uL11 of Synechococcus sp. (strain JA-2-3B'a(2-13)) (Cyanobacteria bacterium Yellowstone B-Prime).